The following is a 163-amino-acid chain: Staphylokinase (163 aa).

Residues 1–27 (MLKRSLLFLTVLLLLFSFSSITNEVSA) form the signal peptide.

It belongs to the staphylokinase family.

Its subcellular location is the secreted. In terms of biological role, potent plasminogen activator that converts plasminogen into plasmin. It forms a 1:1 complex with plasmin, which in turn activates other plasminogen molecules. This is Staphylokinase (sak) from Staphylococcus phage phi13 (Bacteriophage phi-13).